We begin with the raw amino-acid sequence, 135 residues long: Ribosome-binding factor A (135 aa).

Residues 115–135 are disordered; that stretch reads VNEDKRKQQDSGREEDQAGEE. The span at 116–135 shows a compositional bias: basic and acidic residues; that stretch reads NEDKRKQQDSGREEDQAGEE.

The protein belongs to the RbfA family. Monomer. Binds 30S ribosomal subunits, but not 50S ribosomal subunits or 70S ribosomes.

It localises to the cytoplasm. Its function is as follows. One of several proteins that assist in the late maturation steps of the functional core of the 30S ribosomal subunit. Associates with free 30S ribosomal subunits (but not with 30S subunits that are part of 70S ribosomes or polysomes). Required for efficient processing of 16S rRNA. May interact with the 5'-terminal helix region of 16S rRNA. The polypeptide is Ribosome-binding factor A (Vibrio campbellii (strain ATCC BAA-1116)).